Here is a 231-residue protein sequence, read N- to C-terminus: Cytochrome c oxidase subunit 2 (231 aa).

Residues 1–14 (MAHPVHVGLKEATS) lie on the Mitochondrial intermembrane side of the membrane. The helical transmembrane segment at 15–45 (PFMEELIAFHDHTLMIIFLISSLVLYIISMM) threads the bilayer. The Mitochondrial matrix segment spans residues 46–59 (LTTKLTHTSTMNAQ). The chain crosses the membrane as a helical span at residues 60 to 87 (EIEIIWTILPAIILIMIALPSLRILYMT). Over 88–231 (DEFNKPYLTL…WASYLYIVSL (144 aa)) the chain is Mitochondrial intermembrane. The Cu cation site is built by H161, C196, E198, C200, H204, and M207. Residue E198 coordinates Mg(2+).

The protein belongs to the cytochrome c oxidase subunit 2 family. In terms of assembly, component of the cytochrome c oxidase (complex IV, CIV), a multisubunit enzyme composed of 14 subunits. The complex is composed of a catalytic core of 3 subunits MT-CO1, MT-CO2 and MT-CO3, encoded in the mitochondrial DNA, and 11 supernumerary subunits COX4I, COX5A, COX5B, COX6A, COX6B, COX6C, COX7A, COX7B, COX7C, COX8 and NDUFA4, which are encoded in the nuclear genome. The complex exists as a monomer or a dimer and forms supercomplexes (SCs) in the inner mitochondrial membrane with NADH-ubiquinone oxidoreductase (complex I, CI) and ubiquinol-cytochrome c oxidoreductase (cytochrome b-c1 complex, complex III, CIII), resulting in different assemblies (supercomplex SCI(1)III(2)IV(1) and megacomplex MCI(2)III(2)IV(2)). Found in a complex with TMEM177, COA6, COX18, COX20, SCO1 and SCO2. Interacts with TMEM177 in a COX20-dependent manner. Interacts with COX20. Interacts with COX16. Requires Cu cation as cofactor.

It is found in the mitochondrion inner membrane. The enzyme catalyses 4 Fe(II)-[cytochrome c] + O2 + 8 H(+)(in) = 4 Fe(III)-[cytochrome c] + 2 H2O + 4 H(+)(out). In terms of biological role, component of the cytochrome c oxidase, the last enzyme in the mitochondrial electron transport chain which drives oxidative phosphorylation. The respiratory chain contains 3 multisubunit complexes succinate dehydrogenase (complex II, CII), ubiquinol-cytochrome c oxidoreductase (cytochrome b-c1 complex, complex III, CIII) and cytochrome c oxidase (complex IV, CIV), that cooperate to transfer electrons derived from NADH and succinate to molecular oxygen, creating an electrochemical gradient over the inner membrane that drives transmembrane transport and the ATP synthase. Cytochrome c oxidase is the component of the respiratory chain that catalyzes the reduction of oxygen to water. Electrons originating from reduced cytochrome c in the intermembrane space (IMS) are transferred via the dinuclear copper A center (CU(A)) of subunit 2 and heme A of subunit 1 to the active site in subunit 1, a binuclear center (BNC) formed by heme A3 and copper B (CU(B)). The BNC reduces molecular oxygen to 2 water molecules using 4 electrons from cytochrome c in the IMS and 4 protons from the mitochondrial matrix. The polypeptide is Cytochrome c oxidase subunit 2 (MT-CO2) (Brachyteles hypoxanthus (Northern muriqui)).